The following is a 336-amino-acid chain: MSRKPCCVGEGLKKGAWTAEEDKKLISYIHEHGEGGWRDIPQKAGLKRCGKSCRLRWANYLKPDIKRGEFSYEEEQIIIMLHASRGNKWSVIARHLPKRTDNEIKNYWNTHLKKLLIDKGIDPVTHKPLAYDSNPDEQSQSGSISPKSLPPSSSKNVPEITSSDETPKYDASLSSKKRCFKRSSSTSKLLNKVAARASSMGTILGASIEGTLISSTPLSSCLNDDFSETSQFQMEEFDPFYQSSEHIIDHMKEDISINNSEYDFSQFLEQFSNNEGEEADNTGGGYNQDLLMSDVSSTSVDEDEMMQNITGWSNYLLDHSDFNYDTSQDYDDKNFI.

HTH myb-type domains follow at residues 9–65 (GEGL…KPDI) and 66–116 (KRGE…KKLL). 2 consecutive DNA-binding regions (H-T-H motif) follow at residues 37–61 (WRDI…ANYL) and 89–112 (WSVI…NTHL). Positions 127-170 (KPLAYDSNPDEQSQSGSISPKSLPPSSSKNVPEITSSDETPKYD) are disordered. Residues 141–154 (SGSISPKSLPPSSS) are compositionally biased toward low complexity. The segment covering 155 to 164 (KNVPEITSSD) has biased composition (polar residues).

In terms of assembly, can form complexes with MYC2, MYC3 or MYC4. In terms of tissue distribution, expressed in both vegetative and generative organs. Mostly present in seedlings, inflorescences, roots and stems, and, to a lower extent, in leaves (in midvein and trichomes) and siliques.

The protein localises to the nucleus. In terms of biological role, plays a minor rheostat role in aliphatic glucosinolates (GLSs) biosynthesis, mostly short chained. Together with MYB28/HAG1 and MYB76/HAG2, promotes aliphatic glucosinolate biosynthesis but represses indolic glucosinolate biosynthesis. Prevents insect performance (e.g. lepidopteran insect Mamestra brassicae) by promoting glucosinolates. This Arabidopsis thaliana (Mouse-ear cress) protein is Transcription factor MYB29 (MYB29).